The chain runs to 247 residues: MNNFELEKIVNKKLNSNQYNDVIPNGLQIEGRPKIKKIVTGVTACQLLIDLAISNNAHGIIVHHGLFWDNHPKIIKGIYRHRIKSILANNINLYSWHFPLDVHPILGNNAQIGHILNINVRGYIKSCVPWGMLKEPIKSKDMSQLITQKFHRVPFYYGNNITQNIHKIAWCSGKGQKFINFIPEYGVDTFLTGEVSEETIHFAHENKLHFFSIGHHASEINGIKALTNWLKIKFSLDINFINIDNPI.

A divalent metal cation contacts are provided by histidine 63, histidine 64, aspartate 101, histidine 215, and glutamate 219.

Belongs to the GTP cyclohydrolase I type 2/NIF3 family. As to quaternary structure, homohexamer.

The polypeptide is GTP cyclohydrolase 1 type 2 homolog (Buchnera aphidicola subsp. Baizongia pistaciae (strain Bp)).